The sequence spans 230 residues: Preflagellin peptidase (230 aa).

Residue methionine 1 is a topological domain, cytoplasmic. Residues 2 to 18 (IEYIIGALGLIIASVQD) form a helical membrane-spanning segment. Topologically, residues 19–23 (FRSRE) are extracellular. A helical transmembrane segment spans residues 24-46 (IEDYIWIFLAVFGVLFAIYSSIT). The Cytoplasmic portion of the chain corresponds to 47–49 (LLD). The chain crosses the membrane as a helical span at residues 50-72 (YSILINSISGFVICFILGYMMFL). At 73-78 (SGIGGG) the chain is on the extracellular side. The helical transmembrane segment at 79-89 (DGKMLIGLGAL) threads the bilayer. Over 90-110 (VPKFQMPIYTSLGTLLNLNYV) the chain is Cytoplasmic. Residues 111–139 (PTFPIMVFINGIFFMVFLPFVILFRNILN) form a helical membrane-spanning segment. Over 140 to 204 (GARPKTGKEF…EEIWVTPQIP (65 aa)) the chain is Extracellular. Residues 205–216 (LIIPITLSYLVT) traverse the membrane as a helical segment. Over 217-230 (PIIGDRILDFLIPF) the chain is Cytoplasmic.

The protein belongs to the peptidase A24 family. Archaeal preflagellin peptidase subfamily.

The protein resides in the cell membrane. The enzyme catalyses Cleaves the signal peptide of 3 to 12 amino acids from the N-terminal of preflagellin, usually at Arg-Gly-|- or Lys-Gly-|-, to release flagellin.. Cleaves the N-terminal leader peptide from preflagellins. The chain is Preflagellin peptidase (flaK) from Methanococcus maripaludis (strain C6 / ATCC BAA-1332).